A 1055-amino-acid polypeptide reads, in one-letter code: Protein SUPPRESSOR OF QUENCHING 1, chloroplastic (1055 aa).

Residues 1–56 (MALKLTSPPSVFSQSRRLSSSSLIPIRSKSTFTGFRSRTGVYLSKTTALQSSTKLS) constitute a chloroplast transit peptide. Valine 57 carries the N-acetylvaline modification. Over 59–327 (AESPAATIAT…FQGSRRDILR (269 aa)) the chain is Stromal. Aspartate 80 acts as the Nucleophile in catalysis. Residues aspartate 80 and aspartate 82 each coordinate Mg(2+). Substrate is bound at residue aspartate 80. The active-site Proton donor is the aspartate 82. Substrate contacts are provided by residues glutamate 89, 118–122 (TGEAK), 141–144 (AKER), and 183–189 (SSADRIK). Aspartate 242 contacts Mg(2+). The helical transmembrane segment at 328 to 345 (YGSLGIALSCVYFAATNW) threads the bilayer. The Lumenal portion of the chain corresponds to 346–1055 (KAMQYASPKA…AGGLQLQGTR (710 aa)). Positions 359-536 (ALVGAKSPSF…LDDVVAAALT (178 aa)) constitute a Thioredoxin domain. Cysteine 431 and cysteine 434 are joined by a disulfide. NHL repeat units follow at residues 565–597 (PLKFPGKLAIDTLNNRLFISDSNHNRIIVTDLE), 611–647 (GFQDGSFEDAAFNRPQGLAYNAKKNLLYVADTENHAL), 673–712 (GRKGTKQLLNSPWDVCFEPVNEKVYIAMAGQHQIWEYSVL), 802–832 (LQHPLGVLCANDGQIYLTDSYNHKIKKLDPV), and 854–887 (GAQLSEPAGLAITENGRLFVADTNNSLIRYIDLN).

It in the N-terminal section; belongs to the HAD-like hydrolase superfamily. This sequence in the C-terminal section; belongs to the thioredoxin family. It depends on Mg(2+) as a cofactor.

It is found in the plastid. The protein localises to the chloroplast thylakoid membrane. Its function is as follows. Required to maintain light harvesting efficiency, especially during nonphotochemical quenching (NPQ) recovery, via the regulation of chlorophyll excited-state lifetime probably by preventing the formation of a slowly reversible form of antenna quenching. This chain is Protein SUPPRESSOR OF QUENCHING 1, chloroplastic, found in Arabidopsis thaliana (Mouse-ear cress).